A 554-amino-acid chain; its full sequence is Carboxylesterase 1C (554 aa).

An N-terminal signal peptide occupies residues 1 to 18; sequence MWLHALVWASLAVCPILG. An N-linked (GlcNAc...) asparagine glycan is attached at asparagine 79. Cysteine 87 and cysteine 116 are oxidised to a cystine. Serine 221 (acyl-ester intermediate) is an active-site residue. The cysteines at positions 273 and 284 are disulfide-linked. Residues asparagine 274 and asparagine 304 are each glycosylated (N-linked (GlcNAc...) asparagine). Glutamate 342 serves as the catalytic Charge relay system. A glycan (N-linked (GlcNAc...) asparagine) is linked at asparagine 377. Histidine 455 functions as the Charge relay system in the catalytic mechanism. Serine 473 is modified (phosphoserine). The N-linked (GlcNAc...) asparagine glycan is linked to asparagine 478. The Prevents secretion from ER motif lies at 551–554; the sequence is TEHK.

The protein belongs to the type-B carboxylesterase/lipase family. In terms of tissue distribution, expressed in lung, kidney and liver.

The protein resides in the endoplasmic reticulum lumen. It catalyses the reaction a carboxylic ester + H2O = an alcohol + a carboxylate + H(+). Functionally, involved in the detoxification of xenobiotics and in the activation of ester and amide prodrugs. Involved in the extracellular metabolism of lung surfactant. The protein is Carboxylesterase 1C (Ces1c) of Mus musculus (Mouse).